Here is a 193-residue protein sequence, read N- to C-terminus: Chlorate reductase assembly chaperone protein (193 aa).

It belongs to the type II DMSO reductase enzyme chaperone family.

The protein localises to the cytoplasm. Functionally, may function as a system-specific chaperone protein essential for the assembly of an active chlorate reductase ClrABC. The polypeptide is Chlorate reductase assembly chaperone protein (clrD) (Ideonella dechloratans).